A 754-amino-acid polypeptide reads, in one-letter code: MATAQSNSPRVFCIGTADTKFDELRFLSEHVRSSLNSFSNKSSFKVGVTVVDVSTSWKETNSCADFDFVPSKDVLSCHTLGEETMGTFADIRGLAIAIMSKALETFLSIANDEQNLAGVIGLGGSGGTSLLSSAFRSLPIGIPKVIISTVASGQTESYIGTSDLVLFPSVVDICGINNVSKVVLSNAGAAFAGMVIGRLESSKEHSITNGKFTVGVTMFGVTTPCVNAVKERLVKEGYETLVFHATGVGGRAMEDLVRGGFIQGVLDITTTEVADYVVGGVMACDSSRFDAILEKKIPLVLSVGALDMVNFGPKTTIPPEFQQRKIHEHNEQVSLMRTTVGENKKFAAFIAEKLNKASSSVCVCLPEKGVSALDAPGKDFYDPEATSCLTRELQMLLENNERCQVKVLPYHINDAEFANALVDSFLEISPKSRHVECQPAESKSIQDIQNDNAVLEKYPSCNGKNFSRLNDFPNAKPETLQKRTVILQKLKDQISKGKPIIGAGAGTGISAKFEEAGGVDLIVLYNSGRFRMAGRGSLAGLLPFADANAIVLEMANEVLPVVKEVAVLAGVCATDPFRRMDNFLKQLESVGFCGVQNFPTVGLFDGNFRQNLEETGMGYGLEVEMIAAAHRMGLLTTPYAFCPDEAVAMAEAGADIIVAHMGLTTSGSIGAKTAVSLEESVTCVQAIADATHRIYPDAIVLCHGGPISSPEEAAYVLKRTTGVHGFYGASSMERLPVEQAITATVQQYKSISME.

The segment at 1 to 201 (MATAQSNSPR…AGMVIGRLES (201 aa)) is N-terminal inhibitory domain NN. Residues 18–20 (DTK), Thr-55, Arg-92, and 124–127 (GSGG) contribute to the ATP site. The tract at residues 211–431 (KFTVGVTMFG…VDSFLEISPK (221 aa)) is N-terminal inhibitory domain NC.

It belongs to the UPF0261 family. In terms of assembly, homodimer. (Microbial infection) Binds, via an ATP bridge, to the tobamoviruses avirulent (Avr) replication proteins (large and small subunits, e.g. tomato mosaic virus (ToMV/TMV) AC P03587, tobacco mild green mosaic virus (TMGMV) AC P18339 and pepper mild mottle virus (PMMoV) AC P89657) to inhibit their function after the translation of tobamoviruses RNA, but before the viral replication complex formation on the membrane surfaces; this interaction is not possible with resistance-breaking strains replication proteins.

In terms of biological role, inhibitor of viral RNA replication which confers resistance to some tobamoviruses including tomato mosaic virus (ToMV) (e.g. isolate L), tobacco mosaic virus (TMV), tobacco mild green mosaic virus (TMGMV) and pepper mild mottle virus (PMMoV), but not to resistance-breaking isolates of ToMV (e.g. LT1, SL-1 and ToMV1-2) and tomato brown rugose fruit virus (ToBRFV). Prevents tobamoviruses RNA replication by affecting the association of tobamoviruses replication proteins (large and small subunits) with host membrane-associated proteins (e.g. TOM1, TOM2A and ARL8), thus inhibiting the replication complex formation on the membranes and avoiding viral negative-strand RNA synthesis. Inhibits triphosphatase activity of ToMV replication proteins. This Solanum lycopersicum (Tomato) protein is ToMV resistance protein Tm-1(GCR237).